We begin with the raw amino-acid sequence, 1325 residues long: ATP-binding cassette sub-family C member 4 (1325 aa).

One can recognise an ABC transmembrane type-1 1 domain in the interval 92 to 377 (YLVLGIFTLI…FFPSAIERVS (286 aa)). A run of 7 helical transmembrane segments spans residues 93–113 (LVLGIFTLIEESAKVIQPIFL), 136–156 (AYATVLTFCTLILAILHHLYF), 207–227 (QVTVFLHFLWAGPLQAIAVTA), 228–248 (LLWMEIGISCLAGMAVLIILL), 328–348 (SKIIVFVTFTTYVLLGSVITA), 351–371 (VFVAVTLYGAVRLTVTLFFPS), and 440–460 (LLAVVGPVGAGKSSLLSAVLG). The ABC transporter 1 domain maps to 410–633 (VHVQDFTAFW…GIDFGSLLKK (224 aa)). 445–452 (GPVGAGKS) serves as a coordination point for ATP. Phosphothreonine is present on residues Thr646 and Thr648. A compositionally biased stretch (low complexity) spans 657-667 (SSVWSQQSSRP). The tract at residues 657–688 (SSVWSQQSSRPSLKDGALESQDTENVPVTLSE) is disordered. Phosphoserine is present on residues Ser664 and Ser668. The helical transmembrane segment at 710–730 (HWIVFIFLILLNTAAQVAYVL) threads the bilayer. The region spanning 714-1005 (FIFLILLNTA…CVRQSAEVEN (292 aa)) is the ABC transmembrane type-1 2 domain. Asn746 and Asn754 each carry an N-linked (GlcNAc...) asparagine glycan. 6 consecutive transmembrane segments (helical) span residues 771–791 (LTVATVLFGIARSLLVFYVLV), 836–856 (LPLTFLDFIQTLLQVVGVVSV), 858–878 (VAVIPWIAIPLVPLGIIFIFL), 954–974 (AICAMFVIIVAFGSLILAKTL), 977–997 (GQVGLALSYALTLMGMFQWCV), and 1038–1058 (EGVIIFDNVNFMYSPGGPLVL). An ABC transporter 2 domain is found at 1041–1274 (IIFDNVNFMY…KESLFYKMVQ (234 aa)). Residue 1075–1082 (GRTGAGKS) participates in ATP binding. A PDZ-binding motif is present at residues 1322–1325 (ETAL).

Belongs to the ABC transporter superfamily. ABCC family. Conjugate transporter (TC 3.A.1.208) subfamily. As to quaternary structure, interacts (via PDZ-binding motif) with SNX27 (via PDZ domain); this interaction accelerates MRP4 internalization. It depends on Mg(2+) as a cofactor. N-glycosylated; leading to substrate-selective effects on its transport activity. As to expression, widely expressed, with particularly high levels in prostate, but is barely detectable in liver. sinusoidal membrane of hepatocytes.

The protein localises to the basolateral cell membrane. It is found in the apical cell membrane. The enzyme catalyses ATP + H2O + xenobioticSide 1 = ADP + phosphate + xenobioticSide 2.. It catalyses the reaction an S-substituted glutathione(in) + ATP + H2O = an S-substituted glutathione(out) + ADP + phosphate + H(+). The catalysed reaction is 17beta-estradiol 17-O-(beta-D-glucuronate)(in) + ATP + H2O = 17beta-estradiol 17-O-(beta-D-glucuronate)(out) + ADP + phosphate + H(+). It carries out the reaction dehydroepiandrosterone 3-sulfate(in) + ATP + H2O = dehydroepiandrosterone 3-sulfate(out) + ADP + phosphate + H(+). The enzyme catalyses leukotriene C4(in) + ATP + H2O = leukotriene C4(out) + ADP + phosphate + H(+). It catalyses the reaction leukotriene B4(in) + ATP + H2O = leukotriene B4(out) + ADP + phosphate + H(+). The catalysed reaction is urate(in) + ATP + H2O = urate(out) + ADP + phosphate + H(+). It carries out the reaction 3',5'-cyclic GMP(in) + ATP + H2O = 3',5'-cyclic GMP(out) + ADP + phosphate + H(+). The enzyme catalyses 3',5'-cyclic AMP(in) + ATP + H2O = 3',5'-cyclic AMP(out) + ADP + phosphate + H(+). It catalyses the reaction prostaglandin E2(in) + ATP + H2O = prostaglandin E2(out) + ADP + phosphate + H(+). The catalysed reaction is prostaglandin E1(in) + ATP + H2O = prostaglandin E1(out) + ADP + phosphate + H(+). It carries out the reaction glycodeoxycholate(in) + glutathione(in) + ATP + H2O = glycodeoxycholate(out) + glutathione(out) + ADP + phosphate + H(+). The enzyme catalyses cholate(in) + glutathione(in) + ATP + H2O = cholate(out) + glutathione(out) + ADP + phosphate + H(+). It catalyses the reaction glycocholate(in) + glutathione(in) + ATP + H2O = glycocholate(out) + glutathione(out) + ADP + phosphate + H(+). The catalysed reaction is taurocholate(in) + glutathione(in) + ATP + H2O = taurocholate(out) + glutathione(out) + ADP + phosphate + H(+). It carries out the reaction glycochenodeoxycholate(in) + glutathione(in) + ATP + H2O = glycochenodeoxycholate(out) + glutathione(out) + ADP + phosphate + H(+). The enzyme catalyses taurochenodeoxycholate(in) + glutathione(in) + ATP + H2O = taurochenodeoxycholate(out) + glutathione(out) + ADP + phosphate + H(+). It catalyses the reaction glycoursodeoxycholate(in) + glutathione(in) + ATP + H2O = glycoursodeoxycholate(out) + glutathione(out) + ADP + phosphate + H(+). The catalysed reaction is tauroursodeoxycholate(in) + glutathione(in) + ATP + H2O = tauroursodeoxycholate(out) + glutathione(out) + ADP + phosphate + H(+). GSH stimulates the transport of MRP4. Urate inhibits methotrexate transport but stimulates cGMP transport. Nonsteroidal anti-inflammatory drugs (NSAIDs) strongly suppress the transport of MRP4 substrates. ATP-dependent transporter of the ATP-binding cassette (ABC) family that actively extrudes physiological compounds and xenobiotics from cells. Transports a range of endogenous molecules that have a key role in cellular communication and signaling, including cyclic nucleotides such as cyclic AMP (cAMP) and cyclic GMP (cGMP), bile acids, steroid conjugates, urate, and prostaglandins. Mediates the ATP-dependent efflux of glutathione conjugates such as leukotriene C4 (LTC4) and leukotriene B4 (LTB4) too. The presence of GSH is necessary for the ATP-dependent transport of LTB4, whereas GSH is not required for the transport of LTC4. Mediates the cotransport of bile acids with reduced glutathione (GSH). Transports a wide range of drugs and their metabolites, including anticancer, antiviral and antibiotics molecules. Confers resistance to anticancer agents such as methotrexate. This Homo sapiens (Human) protein is ATP-binding cassette sub-family C member 4 (ABCC4).